Here is a 431-residue protein sequence, read N- to C-terminus: Adenosylhomocysteinase (431 aa).

Residues T56, D131, and E156 each contribute to the substrate site. 157–159 (TTT) lines the NAD(+) pocket. Residues K186 and D190 each contribute to the substrate site. NAD(+) is bound by residues N191, 222-227 (GDVGKG), E243, 299-301 (IGH), and N345.

The protein belongs to the adenosylhomocysteinase family. In terms of assembly, homotetramer. Requires NAD(+) as cofactor.

It catalyses the reaction S-adenosyl-L-homocysteine + H2O = L-homocysteine + adenosine. It participates in amino-acid biosynthesis; L-homocysteine biosynthesis; L-homocysteine from S-adenosyl-L-homocysteine: step 1/1. Functionally, adenosylhomocysteine is a competitive inhibitor of S-adenosyl-L-methionine-dependent methyl transferase reactions; therefore adenosylhomocysteinase may play a key role in the control of methylations via regulation of the intracellular concentration of adenosylhomocysteine. The protein is Adenosylhomocysteinase (sahA) of Dictyostelium discoideum (Social amoeba).